The following is a 248-amino-acid chain: DNA repair protein RecO (248 aa).

This sequence belongs to the RecO family.

Its function is as follows. Involved in DNA repair and RecF pathway recombination. The sequence is that of DNA repair protein RecO from Rubrobacter xylanophilus (strain DSM 9941 / JCM 11954 / NBRC 16129 / PRD-1).